A 348-amino-acid chain; its full sequence is Succinylglutamate desuccinylase (348 aa).

Positions 64, 67, and 164 each coordinate Zn(2+). Glu228 is a catalytic residue.

This sequence belongs to the AspA/AstE family. Succinylglutamate desuccinylase subfamily. Requires Zn(2+) as cofactor.

It catalyses the reaction N-succinyl-L-glutamate + H2O = L-glutamate + succinate. It functions in the pathway amino-acid degradation; L-arginine degradation via AST pathway; L-glutamate and succinate from L-arginine: step 5/5. In terms of biological role, transforms N(2)-succinylglutamate into succinate and glutamate. This Shewanella amazonensis (strain ATCC BAA-1098 / SB2B) protein is Succinylglutamate desuccinylase.